Consider the following 375-residue polypeptide: Putative glutamate--cysteine ligase 2 (375 aa).

Belongs to the glutamate--cysteine ligase type 2 family. YbdK subfamily.

It carries out the reaction L-cysteine + L-glutamate + ATP = gamma-L-glutamyl-L-cysteine + ADP + phosphate + H(+). ATP-dependent carboxylate-amine ligase which exhibits weak glutamate--cysteine ligase activity. This chain is Putative glutamate--cysteine ligase 2, found in Sorangium cellulosum (strain So ce56) (Polyangium cellulosum (strain So ce56)).